A 237-amino-acid chain; its full sequence is ATP synthase subunit a (237 aa).

5 helical membrane-spanning segments follow: residues 18-38, 77-97, 114-134, 167-187, and 208-230; these read LTLL…VYWA, SLFL…GLMA, NIAF…VEGI, LALR…LLVT, and AFSV…MYLG.

The protein belongs to the ATPase A chain family. In terms of assembly, F-type ATPases have 2 components, CF(1) - the catalytic core - and CF(0) - the membrane proton channel. CF(1) has five subunits: alpha(3), beta(3), gamma(1), delta(1), epsilon(1). CF(0) has three main subunits: a(1), b(2) and c(9-12). The alpha and beta chains form an alternating ring which encloses part of the gamma chain. CF(1) is attached to CF(0) by a central stalk formed by the gamma and epsilon chains, while a peripheral stalk is formed by the delta and b chains.

Its subcellular location is the cell membrane. Key component of the proton channel; it plays a direct role in the translocation of protons across the membrane. The chain is ATP synthase subunit a from Streptococcus gordonii (strain Challis / ATCC 35105 / BCRC 15272 / CH1 / DL1 / V288).